A 707-amino-acid polypeptide reads, in one-letter code: Transcription factor 12 (707 aa).

Residues 25-109 (AMFSPPVNSG…TPFMNSNLIG (85 aa)) form a disordered region. Polar residues-rich tracts occupy residues 30–48 (PVNS…QFSG) and 56–76 (GTTS…SRGF). Residues Ser-47, Ser-67, and Ser-79 each carry the phosphoserine modification. The segment covering 81 to 93 (HYSDHLNDSRLGT) has biased composition (basic and acidic residues). Ser-98 carries the post-translational modification Phosphoserine. Lys-110 is covalently cross-linked (Glycyl lysine isopeptide (Lys-Gly) (interchain with G-Cter in SUMO2)). Phosphoserine is present on residues Ser-116 and Ser-124. Positions 119–140 (LYSRDSGLSGCQSSLLRQDLGL) are leucine-zipper. 2 disordered regions span residues 140–222 (LGSP…SMFA) and 249–313 (FGGI…ASHT). Residues 144-163 (AQLSSSGKPGTPYYSFSATS) are compositionally biased toward polar residues. A Glycyl lysine isopeptide (Lys-Gly) (interchain with G-Cter in SUMO2) cross-link involves residue Lys-181. Low complexity predominate over residues 256 to 269 (STSHMSQSSSYGSL). Polar residues predominate over residues 282 to 306 (VSPTDINTSLPPMSSFHRGSTSSSP). Thr-313 bears the Phosphothreonine mark. Phosphoserine is present on Ser-333. 2 disordered regions span residues 349–393 (PDHT…YENS) and 521–605 (HKTP…ERRM). Residues 352 to 363 (TSSSFPSNPSTP) show a composition bias toward low complexity. Composition is skewed to polar residues over residues 364–377 (VGSP…TSQW) and 384–393 (APSSPSYENS). Basic and acidic residues-rich tracts occupy residues 543–555 (IKTE…ENLH) and 561–576 (DDMK…DIKV). Lys-544 participates in a covalent cross-link: Glycyl lysine isopeptide (Lys-Gly) (interchain with G-Cter in SUMO2). The residue at position 565 (Ser-565) is a Phosphoserine. A Glycyl lysine isopeptide (Lys-Gly) (interchain with G-Cter in SUMO2) cross-link involves residue Lys-575. Phosphothreonine is present on Thr-582. 2 positions are modified to phosphoserine: Ser-583 and Ser-584. Residues 593-605 (PEQKIEREKERRM) show a composition bias toward basic and acidic residues. Positions 602-655 (ERRMANNARERLRVRDINEAFKELGRMCQLHLKSEKPQTKLLILHQAVAVILSL) constitute a bHLH domain. Residues Lys-634 and Lys-678 each participate in a glycyl lysine isopeptide (Lys-Gly) (interchain with G-Cter in SUMO2) cross-link. The interval 657–680 (QQVRERNLNPKAACLKRREEEKVS) is class A specific domain. The interval 675–707 (EEEKVSAASAEPPTTLPGTHPGLSETTNPMGHL) is disordered. Low complexity predominate over residues 686-697 (PPTTLPGTHPGL). Polar residues predominate over residues 698–707 (SETTNPMGHL).

Efficient DNA binding requires dimerization with another bHLH protein. Forms homo- or heterooligomers with myogenin, E12 and ITF2 proteins. Interacts with PTF1. Interacts with RUNX1T1. Interacts with NEUROD2. Interacts with BHLHA9. In terms of tissue distribution, isoform gamma is highly expressed in lung, kidney, spleen, and is expressed at reduced levels in heart, muscle, liver, pituitary, brain and the trigeminal ganglion. The expression of isoform alpha predominates over isoform gamma in the pituitary and the brain.

The protein localises to the nucleus. Functionally, transcriptional regulator. Involved in the initiation of neuronal differentiation. Activates transcription by binding to the E box (5'-CANNTG-3'). May be involved in the functional network that regulates the development of the GnRH axis. The sequence is that of Transcription factor 12 (Tcf12) from Rattus norvegicus (Rat).